Reading from the N-terminus, the 265-residue chain is Phosphonates import ATP-binding protein PhnC 1 (265 aa).

Residues 7-252 form the ABC transporter domain; that stretch reads IEVSNLSKSF…KLNEIYGTAA (246 aa). 39 to 46 is a binding site for ATP; sequence GASGSGKS.

The protein belongs to the ABC transporter superfamily. Phosphonates importer (TC 3.A.1.9.1) family. The complex is composed of two ATP-binding proteins (PhnC), two transmembrane proteins (PhnE) and a solute-binding protein (PhnD).

Its subcellular location is the cell inner membrane. The catalysed reaction is phosphonate(out) + ATP + H2O = phosphonate(in) + ADP + phosphate + H(+). Functionally, part of the ABC transporter complex PhnCDE involved in phosphonates import. Responsible for energy coupling to the transport system. This is Phosphonates import ATP-binding protein PhnC 1 from Nostoc sp. (strain PCC 7120 / SAG 25.82 / UTEX 2576).